The following is a 160-amino-acid chain: Small ribosomal subunit protein uS10m (160 aa).

This sequence belongs to the universal ribosomal protein uS10 family. As to quaternary structure, component of the mitochondrial ribosome small subunit (28S) which comprises a 12S rRNA and about 30 distinct proteins.

The protein localises to the mitochondrion. The polypeptide is Small ribosomal subunit protein uS10m (Mrps10) (Mus musculus (Mouse)).